Reading from the N-terminus, the 509-residue chain is MSVSALSPTRFADSLSGFLQVASVLGLLLLLVKAVQFYLHRQWLLKAFQQFPSPPFHWFFGHEKFKGDQELQEIVSCIENFPSAFPRWFWGSKAYLTVYDPDYMKVILGRSDPKANGAYRLLAPWIGYGLLLLNGQPWFQHRRMLTPAFHYDILKPYVKNMADSIRLMLDKWERLADQDSSIEIFQHISLMTLDTVMKCAFSHKGSVQVDGNYRTYLQAIGDLNNLFHSRVRNIFHQNDTIYKLSSNGRLAKQACQLAHDHTDGVIKLRKDQLQDEGELEKIKKKRRLDFLDILLFARMENGDSMSDKDLRAEVDTFMFEGHDTTASGVSWIFYALATHPDHQQRCREEVQSLLGDGSSITWDHLDQIPYTTMCIKEALRLYPPVPGIVRELSTSVTFPDGRSLPKGVQVTLSIYGLHHNPKVWPNPEVFDPSRFAPDSPRHSHSFLPFSGGARNCIGKQFAMSELKVIVALTLLRFELLPDPTRVPMPLARLVLKSKNGIYLHLKKLH.

A run of 2 helical transmembrane segments spans residues 15–35 (LSGF…VKAV) and 121–141 (LLAP…WFQH). E320 is a binding site for heme. S439 carries the post-translational modification Phosphoserine. C456 provides a ligand contact to heme.

The protein belongs to the cytochrome P450 family. The cofactor is heme. In terms of tissue distribution, highly expressed in the kidneys of both genders.

The protein resides in the endoplasmic reticulum membrane. Its subcellular location is the microsome membrane. The enzyme catalyses an omega-methyl-long-chain fatty acid + reduced [NADPH--hemoprotein reductase] + O2 = an omega-hydroxy-long-chain fatty acid + oxidized [NADPH--hemoprotein reductase] + H2O + H(+). The catalysed reaction is dodecanoate + reduced [NADPH--hemoprotein reductase] + O2 = 12-hydroxydodecanoate + oxidized [NADPH--hemoprotein reductase] + H2O + H(+). It catalyses the reaction dodecanoate + reduced [NADPH--hemoprotein reductase] + O2 = 11-hydroxydodecanoate + oxidized [NADPH--hemoprotein reductase] + H2O + H(+). It carries out the reaction tetradecanoate + reduced [NADPH--hemoprotein reductase] + O2 = 14-hydroxytetradecanoate + oxidized [NADPH--hemoprotein reductase] + H2O + H(+). The enzyme catalyses hexadecanoate + reduced [NADPH--hemoprotein reductase] + O2 = 16-hydroxyhexadecanoate + oxidized [NADPH--hemoprotein reductase] + H2O + H(+). The catalysed reaction is (9Z)-octadecenoate + reduced [NADPH--hemoprotein reductase] + O2 = 18-hydroxy-(9Z)-octadecenoate + oxidized [NADPH--hemoprotein reductase] + H2O + H(+). It catalyses the reaction (9Z,12Z)-octadecadienoate + reduced [NADPH--hemoprotein reductase] + O2 = 18-hydroxy-(9Z,12Z)-octadecadienoate + oxidized [NADPH--hemoprotein reductase] + H2O + H(+). It carries out the reaction (9Z,12Z)-octadecadienoate + reduced [NADPH--hemoprotein reductase] + O2 = 17-hydroxy-(9Z,12Z)-octadecadienoate + oxidized [NADPH--hemoprotein reductase] + H2O + H(+). The enzyme catalyses (5Z,8Z,11Z,14Z)-eicosatetraenoate + reduced [NADPH--hemoprotein reductase] + O2 = 20-hydroxy-(5Z,8Z,11Z,14Z)-eicosatetraenoate + oxidized [NADPH--hemoprotein reductase] + H2O + H(+). The catalysed reaction is 8,9-epoxy-(5Z,11Z,14Z)-eicosatrienoate + reduced [NADPH--hemoprotein reductase] + O2 = 20-hydroxy-8,9-epoxy-(5Z,11Z,14Z)-eicosatrienoate + oxidized [NADPH--hemoprotein reductase] + H2O + H(+). Functionally, a cytochrome P450 monooxygenase involved in the metabolism of fatty acids. Catalyzes predominantly the oxidation of the terminal carbon (omega-oxidation) of long-chain fatty acids. Acts as a major omega-hydroxylase for dodecanoic (lauric) acid in liver. In kidney, may play an important role in omega-hydroxylation of (5Z,8Z,11Z,14Z)-eicosatetraenoic acid (arachidonate) to 20-hydroxyeicosatetraenoic acid (20-HETE), a signaling molecule acting both as vasoconstrictive and natriuretic with overall effect on arterial blood pressure. Also participates in the formation of anti-inflammatory hydroxyepoxyeicosatrienoic acids (HEETs) in kidney by converting 8,9-epoxyeicosatrienoic acid (EET) to 20,8,9-HEET, an activator of PPARA. Displays substantially lower fatty acid omega-1 hydroxylase activity. Mechanistically, uses molecular oxygen inserting one oxygen atom into a substrate, and reducing the second into a water molecule, with two electrons provided by NADPH via cytochrome P450 reductase (CPR; NADPH-ferrihemoprotein reductase). The sequence is that of Cytochrome P450 4A10 from Mus musculus (Mouse).